The following is a 564-amino-acid chain: Bifunctional sesquiterpene synthase 1 (564 aa).

The Mg(2+) site is built by Asp317, Asp321, Asp461, and Glu469. The DDXXD motif signature appears at 317–321 (DDTFD).

It belongs to the terpene synthase family. The cofactor is Mg(2+).

The enzyme catalyses (2E,6E)-farnesyl diphosphate = alpha-copaene + diphosphate. The catalysed reaction is (2E,6E)-farnesyl diphosphate = delta-cadinene + diphosphate. The protein operates within secondary metabolite biosynthesis; terpenoid biosynthesis. Sesquiterpene synthase converting farnesyl diphosphate to alpha copaene and delta-cadinene as the major products. This chain is Bifunctional sesquiterpene synthase 1, found in Phyla dulcis (Aztec sweet herb).